Reading from the N-terminus, the 215-residue chain is UPF0319 protein VV2_0960 (215 aa).

The signal sequence occupies residues 1–21 (MNIIKPLTCILAMSISGLATA).

It belongs to the UPF0319 family.

The sequence is that of UPF0319 protein VV2_0960 from Vibrio vulnificus (strain CMCP6).